The chain runs to 382 residues: 1-deoxy-D-xylulose 5-phosphate reductoisomerase (382 aa).

5 residues coordinate NADPH: Thr11, Gly12, Ser13, Ile14, and Asn123. A 1-deoxy-D-xylulose 5-phosphate-binding site is contributed by Lys124. NADPH is bound at residue Glu125. Asp149 contacts Mn(2+). Ser150, Glu151, Ser173, and His196 together coordinate 1-deoxy-D-xylulose 5-phosphate. A Mn(2+)-binding site is contributed by Glu151. Gly202 lines the NADPH pocket. Ser209, Asn214, Lys215, and Glu218 together coordinate 1-deoxy-D-xylulose 5-phosphate. A Mn(2+)-binding site is contributed by Glu218.

Belongs to the DXR family. The cofactor is Mg(2+). It depends on Mn(2+) as a cofactor.

The enzyme catalyses 2-C-methyl-D-erythritol 4-phosphate + NADP(+) = 1-deoxy-D-xylulose 5-phosphate + NADPH + H(+). It functions in the pathway isoprenoid biosynthesis; isopentenyl diphosphate biosynthesis via DXP pathway; isopentenyl diphosphate from 1-deoxy-D-xylulose 5-phosphate: step 1/6. In terms of biological role, catalyzes the NADPH-dependent rearrangement and reduction of 1-deoxy-D-xylulose-5-phosphate (DXP) to 2-C-methyl-D-erythritol 4-phosphate (MEP). This Phocaeicola vulgatus (strain ATCC 8482 / DSM 1447 / JCM 5826 / CCUG 4940 / NBRC 14291 / NCTC 11154) (Bacteroides vulgatus) protein is 1-deoxy-D-xylulose 5-phosphate reductoisomerase.